The chain runs to 377 residues: Succinyl-diaminopimelate desuccinylase (377 aa).

H71 contributes to the Zn(2+) binding site. The active site involves D73. D102 provides a ligand contact to Zn(2+). Catalysis depends on E132, which acts as the Proton acceptor. Zn(2+) is bound by residues E133, E161, and H346.

It belongs to the peptidase M20A family. DapE subfamily. Homodimer. It depends on Zn(2+) as a cofactor. Co(2+) serves as cofactor.

It catalyses the reaction N-succinyl-(2S,6S)-2,6-diaminopimelate + H2O = (2S,6S)-2,6-diaminopimelate + succinate. It participates in amino-acid biosynthesis; L-lysine biosynthesis via DAP pathway; LL-2,6-diaminopimelate from (S)-tetrahydrodipicolinate (succinylase route): step 3/3. In terms of biological role, catalyzes the hydrolysis of N-succinyl-L,L-diaminopimelic acid (SDAP), forming succinate and LL-2,6-diaminopimelate (DAP), an intermediate involved in the bacterial biosynthesis of lysine and meso-diaminopimelic acid, an essential component of bacterial cell walls. This is Succinyl-diaminopimelate desuccinylase from Rhizorhabdus wittichii (strain DSM 6014 / CCUG 31198 / JCM 15750 / NBRC 105917 / EY 4224 / RW1) (Sphingomonas wittichii).